An 828-amino-acid polypeptide reads, in one-letter code: Translation initiation factor IF-2 (828 aa).

Disordered regions lie at residues 48-76 and 112-148; these read SYSG…SEEF and ASQE…ESTL. Polar residues predominate over residues 49–58; it reads YSGSTTTLSL. Residues 65–74 show a composition bias toward low complexity; that stretch reads LETGSSSGSE. Over residues 116–126 the composition is skewed to acidic residues; sequence DPIEVEQEESS. Over residues 127-144 the composition is skewed to basic and acidic residues; it reads DTNKVKEEPKIEEVKDIE. The 171-residue stretch at 326–496 folds into the tr-type G domain; it reads SRAPVVTVMG…LLIAEMQNLK (171 aa). Residues 335 to 342 form a G1 region; it reads GHVDHGKT. 335-342 lines the GTP pocket; the sequence is GHVDHGKT. The tract at residues 360–364 is G2; the sequence is GITQH. The tract at residues 382-385 is G3; sequence DTPG. GTP is bound by residues 382–386 and 436–439; these read DTPGH and NKID. Positions 436 to 439 are G4; that stretch reads NKID. The tract at residues 472–474 is G5; it reads SAL.

This sequence belongs to the TRAFAC class translation factor GTPase superfamily. Classic translation factor GTPase family. IF-2 subfamily.

It localises to the cytoplasm. One of the essential components for the initiation of protein synthesis. Protects formylmethionyl-tRNA from spontaneous hydrolysis and promotes its binding to the 30S ribosomal subunits. Also involved in the hydrolysis of GTP during the formation of the 70S ribosomal complex. The sequence is that of Translation initiation factor IF-2 from Rickettsia bellii (strain OSU 85-389).